The following is a 481-amino-acid chain: Proline--tRNA ligase (481 aa).

Belongs to the class-II aminoacyl-tRNA synthetase family. ProS type 3 subfamily. As to quaternary structure, homodimer.

It is found in the cytoplasm. The catalysed reaction is tRNA(Pro) + L-proline + ATP = L-prolyl-tRNA(Pro) + AMP + diphosphate. Its function is as follows. Catalyzes the attachment of proline to tRNA(Pro) in a two-step reaction: proline is first activated by ATP to form Pro-AMP and then transferred to the acceptor end of tRNA(Pro). The polypeptide is Proline--tRNA ligase (Pelodictyon phaeoclathratiforme (strain DSM 5477 / BU-1)).